The sequence spans 210 residues: 3-hexulose-6-phosphate synthase (210 aa).

Belongs to the HPS/KGPDC family. HPS subfamily.

It catalyses the reaction D-ribulose 5-phosphate + formaldehyde = D-arabino-hex-3-ulose 6-phosphate. It participates in one-carbon metabolism; formaldehyde assimilation via RuMP pathway; D-fructose 6-phosphate from D-ribulose 5-phosphate and formaldehyde: step 1/2. Functionally, catalyzes the condensation of ribulose 5-phosphate with formaldehyde to form 3-hexulose 6-phosphate. This is 3-hexulose-6-phosphate synthase from Staphylococcus epidermidis (strain ATCC 35984 / DSM 28319 / BCRC 17069 / CCUG 31568 / BM 3577 / RP62A).